Consider the following 130-residue polypeptide: Small ribosomal subunit protein uS11 (130 aa).

It belongs to the universal ribosomal protein uS11 family. In terms of assembly, part of the 30S ribosomal subunit. Interacts with proteins S7 and S18. Binds to IF-3.

Functionally, located on the platform of the 30S subunit, it bridges several disparate RNA helices of the 16S rRNA. Forms part of the Shine-Dalgarno cleft in the 70S ribosome. The polypeptide is Small ribosomal subunit protein uS11 (Campylobacter curvus (strain 525.92)).